We begin with the raw amino-acid sequence, 142 residues long: Large ribosomal subunit protein uL13 (142 aa).

Belongs to the universal ribosomal protein uL13 family. Part of the 50S ribosomal subunit.

Functionally, this protein is one of the early assembly proteins of the 50S ribosomal subunit, although it is not seen to bind rRNA by itself. It is important during the early stages of 50S assembly. This Desulfotalea psychrophila (strain LSv54 / DSM 12343) protein is Large ribosomal subunit protein uL13.